The chain runs to 675 residues: PTS system glucose-specific EIICBA component (675 aa).

The PTS EIIC type-1 domain occupies 3 to 414 (KKLFGQMQRI…FNYKTPGRED (412 aa)). Transmembrane regions (helical) follow at residues 16–36 (LMLP…GTAF), 59–79 (MLTG…ALGV), 81–101 (IGLA…FIIL), 126–146 (VLGI…GALA), 170–190 (FVPI…AIIW), 211–231 (LAVF…LHHI), 273–293 (FMQG…LAIY), 303–323 (VVAG…ITEP), 328–348 (FLFV…LSFL), 355–375 (VHLG…GILP), and 378–398 (TAWW…YFVF). Residues 425–506 (SQLPFDVLKA…AKIISGEITK (82 aa)) enclose the PTS EIIB type-1 domain. Cysteine 447 functions as the Phosphocysteine intermediate; for EIIB activity in the catalytic mechanism. Residues 547–651 (DKVFSEKMMG…SIITPVIITN (105 aa)) form the PTS EIIA type-1 domain. Histidine 599 acts as the Tele-phosphohistidine intermediate; for EIIA activity in catalysis.

It is found in the cell membrane. It carries out the reaction N(pros)-phospho-L-histidyl-[protein] + D-glucose(out) = D-glucose 6-phosphate(in) + L-histidyl-[protein]. In terms of biological role, the phosphoenolpyruvate-dependent sugar phosphotransferase system (sugar PTS), a major carbohydrate active transport system, catalyzes the phosphorylation of incoming sugar substrates concomitantly with their translocation across the cell membrane. This system is involved in glucose transport. The chain is PTS system glucose-specific EIICBA component (ptsG) from Staphylococcus epidermidis.